Reading from the N-terminus, the 640-residue chain is MLISGRSGWAILGTGGKAAVNRGDAGKLGGQSVIARAHVKVDGDVVSRFATCCRALGLAVYDRQRPADLAAARSGFTALARIAHDQCDVWIGLAAAGDVSTPVLAAISCTADTAGMLQRQVELAPAALGFHYDTGLYLQFRAIGPDDFHLAYAASLASTGGPGPYAEADQIVTGIIDRRPGWRDARWVAAVIHYRAGRWSDVVKLLTPIVNDPDIDEAYTHAAKIALGTALARLGMFAPALSYLEEPAGPVAVAAVDGALAKALVLRAHTDEESASEVLQDLYAAHPDNEQIEQALSDTSFGIVTTTAARIDARTDPWDPETEPGVEDFIDPAAHERKAVLLHEAERQLAEFIGLDEVKNQVSRLKSSVAMELVRKQRGLMVAQRAHHLVFAGPPGTGKTTIARVVAKVYCGLGLLKKENIREVHRADLIGQHIGETEAKTNAVIDSALDGVLFLDEAYALVATGAKNDFGLVAIDTLLARMENDRDRLVVIIAGYRADLDKFLDTNEGLRSRFTRNIDFPSYASHELVEIAHKMAEQRDSVFEQAALDELEVLFANLATSSTPDSNGISRRSLDIAGNGRFVRNIVERSEEEREFRLDHSNNVGTGELSDEELMTVTSEDVRRSVEPLLRGLGLMVPHD.

An ATP-binding site is contributed by 393 to 400 (GPPGTGKT).

The protein belongs to the CbxX/CfxQ family. As to quaternary structure, part of the ESX-3 / type VII secretion system (T7SS), which is composed of cytosolic and membrane components.

The protein localises to the cytoplasm. Part of an ESX-3 / type VII specialized secretion system (T7SS), which exports several proteins. EccA3 exhibits ATPase activity and may provide energy for the export of ESX-3 substrates. In Mycobacterium leprae (strain TN), this protein is ESX-3 secretion system protein EccA3.